The sequence spans 597 residues: Phosphoinositide phosphatase SAC7 (597 aa).

Residues 130-458 (LSVAEKTTGL…GDEISIQYSG (329 aa)) form the SAC domain. The short motif at 393-404 (RSNCIDCLDRTN) is the Phosphatase catalytic core element. The next 2 helical transmembrane spans lie at 528–548 (AVANFPVALFVVLMSFWFATM) and 559–579 (HKHLFFSLLWTGICVGMAALV).

Ubiquitous.

The protein resides in the endoplasmic reticulum membrane. Its subcellular location is the cytoplasmic vesicle membrane. Functionally, phosphoinositide phosphatase that preferentially hydrolyzes PtdIns(4)P. Regulates the accumulation of PtdIns(4)P on membrane compartments at the tips of growing root hairs leading to proper root hair development. This chain is Phosphoinositide phosphatase SAC7 (SAC7), found in Arabidopsis thaliana (Mouse-ear cress).